The sequence spans 198 residues: MAEKQTAKRNRREEILQSLALMLESSDGSQRITTAKLAASVGVSEAALYRHFPSKTRMFDSLIEFIEDSLITRINLILKDEKDTSARLRLIVLLILGFGERNPGLTRILTGHALMFEQDRLQGRINQLFERIEAQLRQVLREKRMREGEGYATDETLLASQLLAFCEGMLSRFVRSEFKYRPTDDFDARWPLVAAQLQ.

The HTH tetR-type domain maps to 10-70 (NRREEILQSL…SLIEFIEDSL (61 aa)). A DNA-binding region (H-T-H motif) is located at residues 33-52 (TTAKLAASVGVSEAALYRHF). A coiled-coil region spans residues 117–144 (EQDRLQGRINQLFERIEAQLRQVLREKR).

It belongs to the nucleoid occlusion factor SlmA family. As to quaternary structure, homodimer. Interacts with FtsZ.

It localises to the cytoplasm. It is found in the nucleoid. Its function is as follows. Required for nucleoid occlusion (NO) phenomenon, which prevents Z-ring formation and cell division over the nucleoid. Acts as a DNA-associated cell division inhibitor that binds simultaneously chromosomal DNA and FtsZ, and disrupts the assembly of FtsZ polymers. SlmA-DNA-binding sequences (SBS) are dispersed on non-Ter regions of the chromosome, preventing FtsZ polymerization at these regions. This chain is Nucleoid occlusion factor SlmA, found in Citrobacter koseri (strain ATCC BAA-895 / CDC 4225-83 / SGSC4696).